Reading from the N-terminus, the 210-residue chain is Adenylate kinase isoenzyme 1 (210 aa).

ATP is bound at residue 30–35; it reads GSGKGT. Positions 50-79 are NMP; sequence SSGDLLRDEVKSGSPRGAQLTAIMESGALV. Residues Ser51, Arg56, 77 to 79, 107 to 110, and Gln114 each bind AMP; these read ALV and GYPR. Positions 144–154 are LID; sequence HRAQTSGRADD. Arg145 contacts ATP. Arg151 and Arg162 together coordinate AMP. ATP is bound at residue Gly190.

The protein belongs to the adenylate kinase family. AK1 subfamily. Monomer.

The protein localises to the cytoplasm. It catalyses the reaction AMP + ATP = 2 ADP. In terms of biological role, catalyzes the reversible transfer of the terminal phosphate group between ATP and AMP. Plays an important role in cellular energy homeostasis and in adenine nucleotide metabolism. This Caenorhabditis elegans protein is Adenylate kinase isoenzyme 1.